Here is a 344-residue protein sequence, read N- to C-terminus: N-acetyl-gamma-glutamyl-phosphate reductase (344 aa).

The active site involves C150.

This sequence belongs to the NAGSA dehydrogenase family. Type 1 subfamily.

Its subcellular location is the cytoplasm. It catalyses the reaction N-acetyl-L-glutamate 5-semialdehyde + phosphate + NADP(+) = N-acetyl-L-glutamyl 5-phosphate + NADPH + H(+). Its pathway is amino-acid biosynthesis; L-arginine biosynthesis; N(2)-acetyl-L-ornithine from L-glutamate: step 3/4. In terms of biological role, catalyzes the NADPH-dependent reduction of N-acetyl-5-glutamyl phosphate to yield N-acetyl-L-glutamate 5-semialdehyde. The polypeptide is N-acetyl-gamma-glutamyl-phosphate reductase (Pseudomonas fluorescens (strain Pf0-1)).